A 293-amino-acid chain; its full sequence is ATP synthase gamma chain (293 aa).

It belongs to the ATPase gamma chain family. As to quaternary structure, F-type ATPases have 2 components, CF(1) - the catalytic core - and CF(0) - the membrane proton channel. CF(1) has five subunits: alpha(3), beta(3), gamma(1), delta(1), epsilon(1). CF(0) has three main subunits: a, b and c.

Its subcellular location is the cell membrane. Its function is as follows. Produces ATP from ADP in the presence of a proton gradient across the membrane. The gamma chain is believed to be important in regulating ATPase activity and the flow of protons through the CF(0) complex. This Streptococcus agalactiae serotype Ia (strain ATCC 27591 / A909 / CDC SS700) protein is ATP synthase gamma chain.